We begin with the raw amino-acid sequence, 1358 residues long: DNA-directed RNA polymerase subunit beta (1358 aa).

The protein belongs to the RNA polymerase beta chain family. As to quaternary structure, the RNAP catalytic core consists of 2 alpha, 1 beta, 1 beta' and 1 omega subunit. When a sigma factor is associated with the core the holoenzyme is formed, which can initiate transcription.

It catalyses the reaction RNA(n) + a ribonucleoside 5'-triphosphate = RNA(n+1) + diphosphate. DNA-dependent RNA polymerase catalyzes the transcription of DNA into RNA using the four ribonucleoside triphosphates as substrates. This Francisella tularensis subsp. tularensis (strain FSC 198) protein is DNA-directed RNA polymerase subunit beta.